A 568-amino-acid polypeptide reads, in one-letter code: MPVLSEDSGLHETLALLTSQLRPDSNHREEMGFLRDVFSEKSLSYLMKIHEKLRYYERQSPTPVLHSAMALAEDVMEELQAASVHSDERELLQLLSTPHLRAVLMVHDTVAQKNFDPVLPPLPDNIDEDFEEESVKIVRLVKNKEPLGATIRRDEHSGAVVVARIMRGGAADRSGLVHVGDELREVNGIAVLHKRPDEISQILAQSQGSITLKIIPATQEEDRFKDSKVFMRALFHYDPREDRAIPCQEAGLPFQRRQVLEVVSQDDPTWWQAKRVGDTNLRAGLIPSKQFQERRLSYRRTTGTLPSPQNFKKPPYDQPCDKETCDCDGYFKGHYVAGLRRSFRLGCRERLGGSQEAKVPTGAESQVLLTYEEVARYQHQPGERPRLVVLIGSLGAHLHELKQRVVAEDPQQFAVAVPHTTRPRKSHERDGVEYHFVSKQAFEADVHHNKFLEHGEYKENLYGTSLEAIQAVMAKNKVCLVDVEPEALRHLRTPEFKPYVIFVKPAIQERRKTPPVSPDSEDIASSLDEQQQEMAASAAFIDQHYGHLIDTVLVRQDLQEPAASSELS.

2 consecutive L27 domains span residues 6-60 and 61-118; these read EDSG…ERQS and PTPV…FDPV. The region spanning 137-218 is the PDZ domain; it reads IVRLVKNKEP…SITLKIIPAT (82 aa). Positions 226–296 constitute an SH3 domain; the sequence is DSKVFMRALF…PSKQFQERRL (71 aa). Ser-307 bears the Phosphoserine mark. Positions 385–568 constitute a Guanylate kinase-like domain; the sequence is PRLVVLIGSL…QEPAASSELS (184 aa).

Belongs to the MAGUK family. Interacts with HTR2C; this interaction stabilizes the receptor at the plasma membrane and prevents the desensitization of the HTR2C receptor-mediated calcium response. Interacts with HTR2A. Interacts with HTR4. Interacts (via PDZ domain) with CADM1 (via C-terminus)Interacts (via PDZ domain) with CADM1; this interaction connects CADM1 with DLG1. Interacts (via Guanylate kinase-like domain) with PALS1. Interacts with DLG1 (via N-terminus); this interaction connects CADM1 with DLG1 and links CADM1 with the regulatory subunit of phosphoinositide-3-kinase (PI3K) by forming a multiprotein complex and participates in cell spreading. As to expression, expressed in brain, skeletal muscle, testis, kidney, and lung.

The protein resides in the apical cell membrane. Its subcellular location is the cell membrane. The protein localises to the cell junction. It localises to the adherens junction. Participates in cell spreading through the phosphoinositide-3-kinase (PI3K) pathway by connecting CADM1 to DLG1 and the regulatory subunit of phosphoinositide-3-kinase (PI3K). Stabilizes HTR2C at the plasma membrane and prevents its desensitization. May participates in the maintenance of adherens junctions. The polypeptide is MAGUK p55 subfamily member 3 (Mus musculus (Mouse)).